A 608-amino-acid chain; its full sequence is Glutamine--fructose-6-phosphate aminotransferase [isomerizing] (608 aa).

C2 acts as the Nucleophile; for GATase activity in catalysis. In terms of domain architecture, Glutamine amidotransferase type-2 spans 2–217 (CGIVGYIGKK…DNEFVLMTKD (216 aa)). 2 consecutive SIS domains span residues 284–424 (ISKE…EKGT) and 453–598 (IMKK…VDKP). K603 serves as the catalytic For Fru-6P isomerization activity.

In terms of assembly, homodimer.

It is found in the cytoplasm. It carries out the reaction D-fructose 6-phosphate + L-glutamine = D-glucosamine 6-phosphate + L-glutamate. Catalyzes the first step in hexosamine metabolism, converting fructose-6P into glucosamine-6P using glutamine as a nitrogen source. This Clostridium tetani (strain Massachusetts / E88) protein is Glutamine--fructose-6-phosphate aminotransferase [isomerizing].